The sequence spans 169 residues: Lipoprotein signal peptidase (169 aa).

The next 4 helical transmembrane spans lie at 4–24, 29–49, 70–90, and 101–121; these read PICSTGLRWLWLAVVVVILDI, WVMAHFALYESVPLIPFFNLT, WFFAGIAIGISVVLMVMMYRS, and YALIIGGALGNLYDRLVHGAV. Residues Asp-123 and Asp-141 contribute to the active site. The chain crosses the membrane as a helical span at residues 137 to 157; it reads FNLADVAISIGAVLVIFEGFL.

It belongs to the peptidase A8 family.

It localises to the cell inner membrane. The catalysed reaction is Release of signal peptides from bacterial membrane prolipoproteins. Hydrolyzes -Xaa-Yaa-Zaa-|-(S,diacylglyceryl)Cys-, in which Xaa is hydrophobic (preferably Leu), and Yaa (Ala or Ser) and Zaa (Gly or Ala) have small, neutral side chains.. It participates in protein modification; lipoprotein biosynthesis (signal peptide cleavage). Functionally, this protein specifically catalyzes the removal of signal peptides from prolipoproteins. The chain is Lipoprotein signal peptidase from Yersinia pseudotuberculosis serotype O:1b (strain IP 31758).